Reading from the N-terminus, the 424-residue chain is Serine--tRNA ligase (424 aa).

Residues 1-15 are compositionally biased toward basic and acidic residues; that stretch reads MIDPKLLRTDPDAVR. The disordered stretch occupies residues 1-27; that stretch reads MIDPKLLRTDPDAVRRSQAARGEDSSV. Residue 230–232 participates in L-serine binding; that stretch reads TSE. ATP-binding positions include 261–263 and V277; that span reads RRE. E284 serves as a coordination point for L-serine. ATP is bound at residue 348 to 351; it reads EITS. L-serine is bound at residue T382.

This sequence belongs to the class-II aminoacyl-tRNA synthetase family. Type-1 seryl-tRNA synthetase subfamily. As to quaternary structure, homodimer. The tRNA molecule binds across the dimer.

It localises to the cytoplasm. It catalyses the reaction tRNA(Ser) + L-serine + ATP = L-seryl-tRNA(Ser) + AMP + diphosphate + H(+). It carries out the reaction tRNA(Sec) + L-serine + ATP = L-seryl-tRNA(Sec) + AMP + diphosphate + H(+). Its pathway is aminoacyl-tRNA biosynthesis; selenocysteinyl-tRNA(Sec) biosynthesis; L-seryl-tRNA(Sec) from L-serine and tRNA(Sec): step 1/1. Catalyzes the attachment of serine to tRNA(Ser). Is also able to aminoacylate tRNA(Sec) with serine, to form the misacylated tRNA L-seryl-tRNA(Sec), which will be further converted into selenocysteinyl-tRNA(Sec). This chain is Serine--tRNA ligase, found in Cutibacterium acnes (strain DSM 16379 / KPA171202) (Propionibacterium acnes).